The sequence spans 47 residues: Large ribosomal subunit protein eL40 (47 aa).

This sequence belongs to the eukaryotic ribosomal protein eL40 family.

This Methanococcus aeolicus (strain ATCC BAA-1280 / DSM 17508 / OCM 812 / Nankai-3) protein is Large ribosomal subunit protein eL40.